The following is a 564-amino-acid chain: Eukaryotic translation initiation factor 3 subunit L (564 aa).

S2 is modified (N-acetylserine). A PCI domain is found at 331–537 (DAIRVFANIL…IHIADTKVAR (207 aa)). N6-acetyllysine is present on residues K465 and K549.

The protein belongs to the eIF-3 subunit L family. In terms of assembly, component of the eukaryotic translation initiation factor 3 (eIF-3) complex, which is composed of 13 subunits: EIF3A, EIF3B, EIF3C, EIF3D, EIF3E, EIF3F, EIF3G, EIF3H, EIF3I, EIF3J, EIF3K, EIF3L and EIF3M. The eIF-3 complex appears to include 3 stable modules: module A is composed of EIF3A, EIF3B, EIF3G and EIF3I; module B is composed of EIF3F, EIF3H, and EIF3M; and module C is composed of EIF3C, EIF3D, EIF3E, EIF3K and EIF3L. EIF3C of module C binds EIF3B of module A and EIF3H of module B, thereby linking the three modules. EIF3J is a labile subunit that binds to the eIF-3 complex via EIF3B. The eIF-3 complex may interact with RPS6KB1 under conditions of nutrient depletion. Mitogenic stimulation may lead to binding and activation of a complex composed of MTOR and RPTOR, leading to phosphorylation and release of RPS6KB1 and binding of EIF4B to eIF-3. Interacts with RRN3.

The protein resides in the cytoplasm. Component of the eukaryotic translation initiation factor 3 (eIF-3) complex, which is required for several steps in the initiation of protein synthesis. The eIF-3 complex associates with the 40S ribosome and facilitates the recruitment of eIF-1, eIF-1A, eIF-2:GTP:methionyl-tRNAi and eIF-5 to form the 43S pre-initiation complex (43S PIC). The eIF-3 complex stimulates mRNA recruitment to the 43S PIC and scanning of the mRNA for AUG recognition. The eIF-3 complex is also required for disassembly and recycling of post-termination ribosomal complexes and subsequently prevents premature joining of the 40S and 60S ribosomal subunits prior to initiation. The eIF-3 complex specifically targets and initiates translation of a subset of mRNAs involved in cell proliferation, including cell cycling, differentiation and apoptosis, and uses different modes of RNA stem-loop binding to exert either translational activation or repression. The protein is Eukaryotic translation initiation factor 3 subunit L (Eif3l) of Mus musculus (Mouse).